The following is a 278-amino-acid chain: S-formylglutathione hydrolase YeiG (278 aa).

Catalysis depends on charge relay system residues Ser145, Asp223, and His256.

The protein belongs to the esterase D family.

It carries out the reaction S-formylglutathione + H2O = formate + glutathione + H(+). Functionally, serine hydrolase involved in the detoxification of formaldehyde. Hydrolyzes S-formylglutathione to glutathione and formate. This is S-formylglutathione hydrolase YeiG (yeiG) from Escherichia coli (strain UTI89 / UPEC).